The primary structure comprises 334 residues: Cytosolic Fe-S cluster assembly factor NUBP1 homolog (334 aa).

The disordered stretch occupies residues 1-24; the sequence is MSSAEVTAAAKPADAPEHCPGTAS. Residues Cys19, Cys33, Cys36, and Cys42 each contribute to the [4Fe-4S] cluster site. 72 to 79 provides a ligand contact to ATP; the sequence is GKGGVGKS. Positions 247 and 250 each coordinate [4Fe-4S] cluster.

The protein belongs to the Mrp/NBP35 ATP-binding proteins family. NUBP1/NBP35 subfamily. Heterotetramer of 2 NUBP1 and 2 NUBP2 chains. It depends on [4Fe-4S] cluster as a cofactor.

It is found in the cytoplasm. Component of the cytosolic iron-sulfur (Fe/S) protein assembly (CIA) machinery. Required for maturation of extramitochondrial Fe-S proteins. The NUBP1-NUBP2 heterotetramer forms a Fe-S scaffold complex, mediating the de novo assembly of an Fe-S cluster and its transfer to target apoproteins. The polypeptide is Cytosolic Fe-S cluster assembly factor NUBP1 homolog (Culex quinquefasciatus (Southern house mosquito)).